The following is a 687-amino-acid chain: Polyphosphate kinase (687 aa).

Asparagine 45 serves as a coordination point for ATP. The Mg(2+) site is built by arginine 373 and arginine 403. The Phosphohistidine intermediate role is filled by histidine 433. ATP contacts are provided by tyrosine 466, arginine 562, and histidine 590. A PLD phosphodiesterase domain is found at 585–615 (DRFLEHDRVYVFENKGDKLVYLSSADWMTRN).

Belongs to the polyphosphate kinase 1 (PPK1) family. Mg(2+) is required as a cofactor. In terms of processing, an intermediate of this reaction is the autophosphorylated ppk in which a phosphate is covalently linked to a histidine residue through a N-P bond.

The enzyme catalyses [phosphate](n) + ATP = [phosphate](n+1) + ADP. Its function is as follows. Catalyzes the reversible transfer of the terminal phosphate of ATP to form a long-chain polyphosphate (polyP). The sequence is that of Polyphosphate kinase from Yersinia pestis.